Here is a 210-residue protein sequence, read N- to C-terminus: MEALGGYPTRSSNPKAKKLTVLLSMTVGVGCLLLLQTQLLKPRRPSDFYSFEVKDAKGRTVSLEKYRGKASLVVNVASRSEQTESNYRSLQELHRELGPSHFNVLAFPCAQFGETETGSSRDSEAFAKATYGVTFPFFSRIKIMGSEAEPAFRFLTDSVQKVPRWNFWKFLVNPEGKVVRFWRTDEPMESIRREVTALVREIILKKRVEL.

A helical transmembrane segment spans residues 21-40 (VLLSMTVGVGCLLLLQTQLL).

Belongs to the glutathione peroxidase family.

It localises to the membrane. It catalyses the reaction 2 glutathione + H2O2 = glutathione disulfide + 2 H2O. This Tetraodon nigroviridis (Spotted green pufferfish) protein is Probable glutathione peroxidase 8 (gpx8).